Here is a 407-residue protein sequence, read N- to C-terminus: Peptidase T (407 aa).

Histidine 82 is a binding site for Zn(2+). Aspartate 84 is an active-site residue. Residue aspartate 143 participates in Zn(2+) binding. Residue glutamate 177 is the Proton acceptor of the active site. Zn(2+) contacts are provided by glutamate 178, aspartate 200, and histidine 382.

It belongs to the peptidase M20B family. Zn(2+) serves as cofactor.

It localises to the cytoplasm. The enzyme catalyses Release of the N-terminal residue from a tripeptide.. In terms of biological role, cleaves the N-terminal amino acid of tripeptides. The chain is Peptidase T from Streptococcus pyogenes serotype M2 (strain MGAS10270).